The following is a 310-amino-acid chain: Malate dehydrogenase (310 aa).

Residues 7-13 and aspartate 34 contribute to the NAD(+) site; that span reads GAAGGIG. Substrate is bound by residues arginine 81 and arginine 87. Residues asparagine 94 and 117-119 each bind NAD(+); that span reads ITN. Positions 119 and 153 each coordinate substrate. Histidine 177 acts as the Proton acceptor in catalysis. NAD(+) is bound at residue methionine 227.

This sequence belongs to the LDH/MDH superfamily. MDH type 1 family. As to quaternary structure, homodimer.

It carries out the reaction (S)-malate + NAD(+) = oxaloacetate + NADH + H(+). Its function is as follows. Catalyzes the reversible oxidation of malate to oxaloacetate. In Vibrio vulnificus (strain CMCP6), this protein is Malate dehydrogenase.